The chain runs to 131 residues: Fumarate reductase subunit C (131 aa).

Transmembrane regions (helical) follow at residues 30–50, 57–77, and 109–129; these read EGTAVPAVWFSIELIFGLFAL, WMGFVGFLQNPVVVILNLITL, and IIKGLWVVTAVVTVVILYVAL.

This sequence belongs to the FrdC family. As to quaternary structure, part of an enzyme complex containing four subunits: a flavoprotein (FrdA), an iron-sulfur protein (FrdB), and two hydrophobic anchor proteins (FrdC and FrdD).

It is found in the cell inner membrane. Functionally, two distinct, membrane-bound, FAD-containing enzymes are responsible for the catalysis of fumarate and succinate interconversion; fumarate reductase is used in anaerobic growth, and succinate dehydrogenase is used in aerobic growth. Anchors the catalytic components of the fumarate reductase complex to the cell inner membrane, binds quinones. The sequence is that of Fumarate reductase subunit C from Salmonella heidelberg (strain SL476).